We begin with the raw amino-acid sequence, 437 residues long: Phosphomethylpyrimidine synthase (437 aa).

Residues asparagine 69, methionine 98, tyrosine 127, histidine 163, 185 to 187 (SRG), 226 to 229 (DACR), and glutamate 265 contribute to the substrate site. Histidine 269 serves as a coordination point for Zn(2+). Tyrosine 292 is a substrate binding site. Histidine 333 contributes to the Zn(2+) binding site. The [4Fe-4S] cluster site is built by cysteine 409, cysteine 412, and cysteine 416.

This sequence belongs to the ThiC family. Requires [4Fe-4S] cluster as cofactor.

The enzyme catalyses 5-amino-1-(5-phospho-beta-D-ribosyl)imidazole + S-adenosyl-L-methionine = 4-amino-2-methyl-5-(phosphooxymethyl)pyrimidine + CO + 5'-deoxyadenosine + formate + L-methionine + 3 H(+). It functions in the pathway cofactor biosynthesis; thiamine diphosphate biosynthesis. Functionally, catalyzes the synthesis of the hydroxymethylpyrimidine phosphate (HMP-P) moiety of thiamine from aminoimidazole ribotide (AIR) in a radical S-adenosyl-L-methionine (SAM)-dependent reaction. This Clostridium botulinum (strain Kyoto / Type A2) protein is Phosphomethylpyrimidine synthase.